A 155-amino-acid chain; its full sequence is Small ribosomal subunit protein bS6 (155 aa).

Residues 94 to 155 (EKHEEGPSAM…RPRRPREDRV (62 aa)) are disordered.

It belongs to the bacterial ribosomal protein bS6 family.

Its function is as follows. Binds together with bS18 to 16S ribosomal RNA. The sequence is that of Small ribosomal subunit protein bS6 from Rhizobium leguminosarum bv. trifolii (strain WSM2304).